We begin with the raw amino-acid sequence, 136 residues long: Protein PsiE homolog (136 aa).

The next 4 membrane-spanning stretches (helical) occupy residues alanine 15–leucine 35, valine 58–phenylalanine 78, histidine 83–isoleucine 103, and proline 108–cysteine 128.

This sequence belongs to the PsiE family.

Its subcellular location is the cell inner membrane. In Klebsiella pneumoniae (strain 342), this protein is Protein PsiE homolog.